We begin with the raw amino-acid sequence, 378 residues long: Chaperone protein DnaJ (378 aa).

Residues 5–70 (DYYESLGVAK…QKRAAYDQYG (66 aa)) form the J domain. A CR-type zinc finger spans residues 133-211 (GVTKEIRIPA…CHGHGRVEKS (79 aa)). Zn(2+) is bound by residues Cys146, Cys149, Cys163, Cys166, Cys185, Cys188, Cys199, and Cys202. 4 CXXCXGXG motif repeats span residues 146 to 153 (CDVCHGNG), 163 to 170 (CPTCHGNG), 185 to 192 (CPHCHGRG), and 199 to 206 (CVKCHGHG).

It belongs to the DnaJ family. As to quaternary structure, homodimer. Requires Zn(2+) as cofactor.

It is found in the cytoplasm. Its function is as follows. Participates actively in the response to hyperosmotic and heat shock by preventing the aggregation of stress-denatured proteins and by disaggregating proteins, also in an autonomous, DnaK-independent fashion. Unfolded proteins bind initially to DnaJ; upon interaction with the DnaJ-bound protein, DnaK hydrolyzes its bound ATP, resulting in the formation of a stable complex. GrpE releases ADP from DnaK; ATP binding to DnaK triggers the release of the substrate protein, thus completing the reaction cycle. Several rounds of ATP-dependent interactions between DnaJ, DnaK and GrpE are required for fully efficient folding. Also involved, together with DnaK and GrpE, in the DNA replication of plasmids through activation of initiation proteins. This chain is Chaperone protein DnaJ, found in Pectobacterium carotovorum subsp. carotovorum (strain PC1).